Here is a 464-residue protein sequence, read N- to C-terminus: ATP-dependent protease ATPase subunit HslU (464 aa).

Residues Val-18, 60–65, Asp-277, Glu-342, and Arg-414 contribute to the ATP site; that span reads GVGKTE.

This sequence belongs to the ClpX chaperone family. HslU subfamily. As to quaternary structure, a double ring-shaped homohexamer of HslV is capped on each side by a ring-shaped HslU homohexamer. The assembly of the HslU/HslV complex is dependent on binding of ATP.

It localises to the cytoplasm. Functionally, ATPase subunit of a proteasome-like degradation complex; this subunit has chaperone activity. The binding of ATP and its subsequent hydrolysis by HslU are essential for unfolding of protein substrates subsequently hydrolyzed by HslV. HslU recognizes the N-terminal part of its protein substrates and unfolds these before they are guided to HslV for hydrolysis. The polypeptide is ATP-dependent protease ATPase subunit HslU (Lactobacillus leichmannii).